Consider the following 246-residue polypeptide: E3 ubiquitin-protein ligase LubX (246 aa).

U-box domains lie at 36–109 (TTPT…QTNY) and 131–204 (EIPD…RKRE).

In terms of assembly, interacts with host CLK1. In terms of processing, ubiquitinated in the presence of host E1 ubiquitin-activating enzyme, E2 ubiquitin-conjugating enzyme (UBE2D1 or UBE2D3) and ubiquitin.

Its subcellular location is the secreted. It localises to the host cell. It carries out the reaction S-ubiquitinyl-[E2 ubiquitin-conjugating enzyme]-L-cysteine + [acceptor protein]-L-lysine = [E2 ubiquitin-conjugating enzyme]-L-cysteine + N(6)-ubiquitinyl-[acceptor protein]-L-lysine.. Functionally, effector proteins function to alter host cell physiology and promote bacterial survival in host tissues. This protein is an E3 ubiquitin ligase that interferes with host's ubiquitination pathway. Acts in conjunction with host E2 ubiquitin-conjugating enzymes UBE2D1 (UBCH5A) or UBE2D3 (UBCH5C), and mediates polyubiquitination of host kinase CLK1. The protein is E3 ubiquitin-protein ligase LubX (lubX) of Legionella pneumophila subsp. pneumophila (strain Philadelphia 1 / ATCC 33152 / DSM 7513).